A 140-amino-acid polypeptide reads, in one-letter code: Profilin-2 (140 aa).

Ala-2 carries the post-translational modification N-acetylalanine.

The protein belongs to the profilin family. As to quaternary structure, occurs in many kinds of cells as a complex with monomeric actin in a 1:1 ratio. Interacts with PFN2. Interacts with ACTMAP (via N-terminus); the interaction may facilitate efficient cleavage of the acetylated N-terminus of immature actin by ACTMAP.

The protein localises to the cytoplasm. It localises to the cytoskeleton. In terms of biological role, binds to actin and affects the structure of the cytoskeleton. At high concentrations, profilin prevents the polymerization of actin, whereas it enhances it at low concentrations. By binding to PIP2, it inhibits the formation of IP3 and DG. The polypeptide is Profilin-2 (PFN2) (Bos taurus (Bovine)).